The sequence spans 145 residues: D-aminoacyl-tRNA deacylase (145 aa).

The Gly-cisPro motif, important for rejection of L-amino acids signature appears at 137–138; that stretch reads GP.

Belongs to the DTD family. As to quaternary structure, homodimer.

The protein resides in the cytoplasm. The enzyme catalyses glycyl-tRNA(Ala) + H2O = tRNA(Ala) + glycine + H(+). It catalyses the reaction a D-aminoacyl-tRNA + H2O = a tRNA + a D-alpha-amino acid + H(+). In terms of biological role, an aminoacyl-tRNA editing enzyme that deacylates mischarged D-aminoacyl-tRNAs. Also deacylates mischarged glycyl-tRNA(Ala), protecting cells against glycine mischarging by AlaRS. Acts via tRNA-based rather than protein-based catalysis; rejects L-amino acids rather than detecting D-amino acids in the active site. By recycling D-aminoacyl-tRNA to D-amino acids and free tRNA molecules, this enzyme counteracts the toxicity associated with the formation of D-aminoacyl-tRNA entities in vivo and helps enforce protein L-homochirality. The protein is D-aminoacyl-tRNA deacylase of Klebsiella pneumoniae subsp. pneumoniae (strain ATCC 700721 / MGH 78578).